The following is a 406-amino-acid chain: Tryptophan 2,3-dioxygenase (406 aa).

Substrate is bound by residues 72–76 and Arg-144; that span reads FIVTH. His-328 is a binding site for heme. Residue Thr-342 participates in substrate binding.

It belongs to the tryptophan 2,3-dioxygenase family. In terms of assembly, homotetramer. Dimer of dimers. Heme is required as a cofactor.

The enzyme catalyses L-tryptophan + O2 = N-formyl-L-kynurenine. Its pathway is amino-acid degradation; L-tryptophan degradation via kynurenine pathway; L-kynurenine from L-tryptophan: step 1/2. Its function is as follows. Heme-dependent dioxygenase that catalyzes the oxidative cleavage of the L-tryptophan (L-Trp) pyrrole ring and converts L-tryptophan to N-formyl-L-kynurenine. Catalyzes the oxidative cleavage of the indole moiety. The polypeptide is Tryptophan 2,3-dioxygenase (Xenopus laevis (African clawed frog)).